A 460-amino-acid polypeptide reads, in one-letter code: ATP synthase subunit beta (460 aa).

150-157 (GGAGVGKT) provides a ligand contact to ATP.

The protein belongs to the ATPase alpha/beta chains family. As to quaternary structure, F-type ATPases have 2 components, CF(1) - the catalytic core - and CF(0) - the membrane proton channel. CF(1) has five subunits: alpha(3), beta(3), gamma(1), delta(1), epsilon(1). CF(0) has three main subunits: a(1), b(2) and c(9-12). The alpha and beta chains form an alternating ring which encloses part of the gamma chain. CF(1) is attached to CF(0) by a central stalk formed by the gamma and epsilon chains, while a peripheral stalk is formed by the delta and b chains.

The protein resides in the cell inner membrane. The enzyme catalyses ATP + H2O + 4 H(+)(in) = ADP + phosphate + 5 H(+)(out). Its function is as follows. Produces ATP from ADP in the presence of a proton gradient across the membrane. The catalytic sites are hosted primarily by the beta subunits. The protein is ATP synthase subunit beta of Shigella dysenteriae serotype 1 (strain Sd197).